We begin with the raw amino-acid sequence, 383 residues long: Fatty acid hydroxylase ahd1 (383 aa).

Helical transmembrane passes span V84–W104, T123–L143, L172–Y192, and V214–H236. The region spanning W217–T341 is the Fatty acid hydroxylase domain. The N-linked (GlcNAc...) asparagine glycan is linked to N342.

Belongs to the sterol desaturase family.

It localises to the membrane. The protein operates within secondary metabolite biosynthesis. In terms of biological role, fatty acid hydroxylase; part of the gene cluster that mediates the biosynthesis of the glycolipid biosurfactant ustilagic acid (UA). UA is a secreted cellobiose glycolipid that is toxic for many microorganisms and confers biocontrol activity to U.maydis. UA consists of 15,16-dihydroxypalmitic or 2,15,16-trihydroxypalmitic acid, which is O-glycosidically linked to cellobiose at its terminal hydroxyl group. In addition, the cellobiose moiety is acetylated and acylated with a short-chain hydroxy fatty acid. UA biosynthesis starts with omega-hydroxylation of palmitic acid catalyzed by the cytochrome P450 monooxygenase cyp1. Terminal hydroxylation of palmitic acid precedes subterminal hydroxylation catalyzed by the cytochrome P450 monooxygenase cyp2. Sequential glucosylation of the hydroxy fatty acid is probably catalyzed by the glycosyltransferase ugt1. The cellobiose lipid is further decorated by acetylation of the proximal glucose residue and by acylation with a short-chain beta-hydroxy fatty acid at the distal glucose residue. The acyltransferase uat1 may be a good candidate for catalyzing either acetylation or acylation of the cellobiose lipid. The fatty acid synthase fas2 may be involved in synthesis of the carbon backbone of the short-chain beta-hydroxy fatty acid esterified to the cellobiose disaccharide. The secreted UA consists of a mixture of both alpha-hydroxylated and non-hydroxylated glycolipids; therefore, alpha-hydroxylation of the long-chain fatty, catalyzed by the fatty acid hydroxylase ahd1, occurs late in UA biosynthesis and may be the last step before secretion. This Mycosarcoma maydis (Corn smut fungus) protein is Fatty acid hydroxylase ahd1.